The sequence spans 114 residues: Chaperone protein YscY (114 aa).

As to quaternary structure, binds to YscX.

It localises to the cytoplasm. Required for Yop secretion. Functions probably as a chaperone which stabilizes YscX within the cell, before its secretion. This Yersinia enterocolitica protein is Chaperone protein YscY (yscY).